The chain runs to 229 residues: Large ribosomal subunit protein uL1 (229 aa).

Belongs to the universal ribosomal protein uL1 family. In terms of assembly, part of the 50S ribosomal subunit.

Binds directly to 23S rRNA. The L1 stalk is quite mobile in the ribosome, and is involved in E site tRNA release. Its function is as follows. Protein L1 is also a translational repressor protein, it controls the translation of the L11 operon by binding to its mRNA. In Chlorobium luteolum (strain DSM 273 / BCRC 81028 / 2530) (Pelodictyon luteolum), this protein is Large ribosomal subunit protein uL1.